A 461-amino-acid chain; its full sequence is D-phenylhydantoinase (461 aa).

A divalent metal cation is bound by residues histidine 59, histidine 61, and lysine 151. Lysine 151 is modified (N6-carboxylysine). Tyrosine 156 is a substrate binding site. Positions 182 and 239 each coordinate a divalent metal cation. Serine 286 lines the substrate pocket. Residue aspartate 313 participates in a divalent metal cation binding. Asparagine 335 contacts substrate.

It belongs to the metallo-dependent hydrolases superfamily. Hydantoinase/dihydropyrimidinase family. Homotetramer. Requires a divalent metal cation as cofactor. Carboxylation allows a single lysine to coordinate two divalent metal cations.

It carries out the reaction D-5-phenylhydantoin + H2O = N-carbamoyl-D-phenylglycine + H(+). Functionally, catalyzes the stereospecific hydrolysis of the cyclic amide bond of D-hydantoin derivatives with an aromatic side chains at the 5'-position. Has no activity on dihydropyrimidines. The physiological function is unknown. This chain is D-phenylhydantoinase, found in Escherichia coli (strain 55989 / EAEC).